The chain runs to 400 residues: Argininosuccinate synthase (400 aa).

ATP contacts are provided by residues 10 to 18 (AYSGGVDTS) and alanine 38. Tyrosine 89 provides a ligand contact to L-citrulline. Position 119 (glycine 119) interacts with ATP. Positions 121, 125, and 126 each coordinate L-aspartate. An L-citrulline-binding site is contributed by asparagine 125. L-citrulline-binding residues include arginine 129, serine 177, serine 186, glutamate 262, and tyrosine 274.

This sequence belongs to the argininosuccinate synthase family. Type 1 subfamily. As to quaternary structure, homotetramer.

It is found in the cytoplasm. It carries out the reaction L-citrulline + L-aspartate + ATP = 2-(N(omega)-L-arginino)succinate + AMP + diphosphate + H(+). It participates in amino-acid biosynthesis; L-arginine biosynthesis; L-arginine from L-ornithine and carbamoyl phosphate: step 2/3. The protein is Argininosuccinate synthase of Nostoc punctiforme (strain ATCC 29133 / PCC 73102).